The following is a 133-amino-acid chain: Small ribosomal subunit protein uS8 (133 aa).

Belongs to the universal ribosomal protein uS8 family. As to quaternary structure, part of the 30S ribosomal subunit. Contacts proteins S5 and S12.

Its function is as follows. One of the primary rRNA binding proteins, it binds directly to 16S rRNA central domain where it helps coordinate assembly of the platform of the 30S subunit. In Deinococcus deserti (strain DSM 17065 / CIP 109153 / LMG 22923 / VCD115), this protein is Small ribosomal subunit protein uS8.